Consider the following 82-residue polypeptide: Acyl carrier protein (82 aa).

One can recognise a Carrier domain in the interval Pro-4–Leu-79. An O-(pantetheine 4'-phosphoryl)serine modification is found at Ser-39.

It belongs to the acyl carrier protein (ACP) family. 4'-phosphopantetheine is transferred from CoA to a specific serine of apo-ACP by AcpS. This modification is essential for activity because fatty acids are bound in thioester linkage to the sulfhydryl of the prosthetic group.

Its subcellular location is the cytoplasm. The protein operates within lipid metabolism; fatty acid biosynthesis. Its function is as follows. Carrier of the growing fatty acid chain in fatty acid biosynthesis. This is Acyl carrier protein from Roseiflexus sp. (strain RS-1).